Reading from the N-terminus, the 114-residue chain is Probable prefoldin subunit 2 (114 aa).

It belongs to the prefoldin subunit beta family. As to quaternary structure, heterohexamer of two PFD-alpha type and four PFD-beta type subunits.

In terms of biological role, binds specifically to cytosolic chaperonin (c-CPN) and transfers target proteins to it. Binds to nascent polypeptide chain and promotes folding in an environment in which there are many competing pathways for nonnative proteins. This is Probable prefoldin subunit 2 from Schizosaccharomyces pombe (strain 972 / ATCC 24843) (Fission yeast).